A 97-amino-acid polypeptide reads, in one-letter code: Aspartyl/glutamyl-tRNA(Asn/Gln) amidotransferase subunit C (97 aa).

This sequence belongs to the GatC family. As to quaternary structure, heterotrimer of A, B and C subunits.

The catalysed reaction is L-glutamyl-tRNA(Gln) + L-glutamine + ATP + H2O = L-glutaminyl-tRNA(Gln) + L-glutamate + ADP + phosphate + H(+). The enzyme catalyses L-aspartyl-tRNA(Asn) + L-glutamine + ATP + H2O = L-asparaginyl-tRNA(Asn) + L-glutamate + ADP + phosphate + 2 H(+). Its function is as follows. Allows the formation of correctly charged Asn-tRNA(Asn) or Gln-tRNA(Gln) through the transamidation of misacylated Asp-tRNA(Asn) or Glu-tRNA(Gln) in organisms which lack either or both of asparaginyl-tRNA or glutaminyl-tRNA synthetases. The reaction takes place in the presence of glutamine and ATP through an activated phospho-Asp-tRNA(Asn) or phospho-Glu-tRNA(Gln). This Prochlorococcus marinus (strain MIT 9301) protein is Aspartyl/glutamyl-tRNA(Asn/Gln) amidotransferase subunit C.